The primary structure comprises 422 residues: NADH-quinone oxidoreductase subunit D 1 (422 aa).

Belongs to the complex I 49 kDa subunit family. NDH-1 is composed of 14 different subunits. Subunits NuoB, C, D, E, F, and G constitute the peripheral sector of the complex.

Its subcellular location is the cell membrane. It catalyses the reaction a quinone + NADH + 5 H(+)(in) = a quinol + NAD(+) + 4 H(+)(out). In terms of biological role, NDH-1 shuttles electrons from NADH, via FMN and iron-sulfur (Fe-S) centers, to quinones in the respiratory chain. The immediate electron acceptor for the enzyme in this species is believed to be ubiquinone. Couples the redox reaction to proton translocation (for every two electrons transferred, four hydrogen ions are translocated across the cytoplasmic membrane), and thus conserves the redox energy in a proton gradient. The chain is NADH-quinone oxidoreductase subunit D 1 from Herpetosiphon aurantiacus (strain ATCC 23779 / DSM 785 / 114-95).